Here is a 123-residue protein sequence, read N- to C-terminus: uncharacterized protein (123 aa).

Residues M1 to T24 form the signal peptide. Transmembrane regions (helical) follow at residues F39–I59 and F101–G121.

The protein resides in the membrane. This is an uncharacterized protein from Saccharomyces cerevisiae (strain ATCC 204508 / S288c) (Baker's yeast).